The following is a 100-amino-acid chain: Thioredoxin (100 aa).

Residues 1–100 (MKHITNKAEL…PKNELKELLK (100 aa)) enclose the Thioredoxin domain. Cysteines 29 and 32 form a disulfide.

It belongs to the thioredoxin family.

Participates in various redox reactions through the reversible oxidation of its active center dithiol to a disulfide and catalyzes dithiol-disulfide exchange reactions. In Mycoplasmoides gallisepticum (strain R(low / passage 15 / clone 2)) (Mycoplasma gallisepticum), this protein is Thioredoxin (trxA).